We begin with the raw amino-acid sequence, 173 residues long: Myeloid-derived growth factor (173 aa).

The signal sequence occupies residues 1 to 31; sequence MAAPSGGWNGVGASLWAALLLGAVALRPAEA.

Belongs to the MYDGF family. In terms of tissue distribution, expressed in eosinophils (at protein level). Expressed in bone marrow cells. Expressed in synovial tissue. Found in synovial fluid of patients with arthropaties.

The protein localises to the secreted. It is found in the endoplasmic reticulum-Golgi intermediate compartment. The protein resides in the endoplasmic reticulum. Its subcellular location is the golgi apparatus. Bone marrow-derived monocyte and paracrine-acting protein that promotes cardiac myocyte survival and adaptive angiogenesis for cardiac protection and/or repair after myocardial infarction (MI). Stimulates endothelial cell proliferation through a MAPK1/3-, STAT3- and CCND1-mediated signaling pathway. Inhibits cardiac myocyte apoptosis in a PI3K/AKT-dependent signaling pathway. Involved in endothelial cell proliferation and angiogenesis. This is Myeloid-derived growth factor from Homo sapiens (Human).